We begin with the raw amino-acid sequence, 507 residues long: Probable cytosol aminopeptidase (507 aa).

Mn(2+) is bound by residues Lys-271 and Asp-276. Residue Lys-283 is part of the active site. Mn(2+) is bound by residues Asp-294, Asp-353, and Glu-355. Residue Arg-357 is part of the active site.

It belongs to the peptidase M17 family. The cofactor is Mn(2+).

The protein localises to the cytoplasm. It catalyses the reaction Release of an N-terminal amino acid, Xaa-|-Yaa-, in which Xaa is preferably Leu, but may be other amino acids including Pro although not Arg or Lys, and Yaa may be Pro. Amino acid amides and methyl esters are also readily hydrolyzed, but rates on arylamides are exceedingly low.. The enzyme catalyses Release of an N-terminal amino acid, preferentially leucine, but not glutamic or aspartic acids.. In terms of biological role, presumably involved in the processing and regular turnover of intracellular proteins. Catalyzes the removal of unsubstituted N-terminal amino acids from various peptides. The protein is Probable cytosol aminopeptidase of Nitratidesulfovibrio vulgaris (strain ATCC 29579 / DSM 644 / CCUG 34227 / NCIMB 8303 / VKM B-1760 / Hildenborough) (Desulfovibrio vulgaris).